We begin with the raw amino-acid sequence, 326 residues long: Protein SEH1 (326 aa).

WD repeat units lie at residues 7-46 (TLDS…SSTF), 54-95 (VSES…AHGL), 105-146 (NKSS…ELKN), 224-266 (DKGD…DLEG), and 278-317 (GHQG…EWHE).

This sequence belongs to the WD repeat SEC13 family. In terms of assembly, part of the nuclear pore complex (NPC). The NPC has an eight-fold symmetrical structure comprising a central transport channel and two rings, the cytoplasmic and nuclear rings, to which eight filaments are attached. The cytoplasmic filaments have loose ends, while the nuclear filaments are joined in a distal ring, forming a nuclear basket. NPCs are highly dynamic in configuration and composition, and can be devided in 3 subcomplexes, the NUP62 subcomplex, the NUP107-160 subcomplex and the NUP93 subcomplex, containing approximately 30 different nucleoporin proteins.

The protein resides in the nucleus envelope. Its subcellular location is the nucleus. It localises to the cytoplasm. The protein localises to the nuclear pore complex. In terms of biological role, required for proper export of mRNAs from the nucleus to the cytoplasm. The polypeptide is Protein SEH1 (Arabidopsis thaliana (Mouse-ear cress)).